The chain runs to 314 residues: Peroxidase 2 (314 aa).

An N-terminal signal peptide occupies residues 1-23; that stretch reads MASASSVSLMLLVAAAMASAASA. Gln-24 is subject to Pyrrolidone carboxylic acid. 4 cysteine pairs are disulfide-bonded: Cys-34/Cys-109, Cys-67/Cys-72, Cys-115/Cys-310, and Cys-194/Cys-219. His-65 acts as the Proton acceptor in catalysis. Asp-66, Val-69, Gly-71, Asp-73, and Ser-75 together coordinate Ca(2+). The N-linked (GlcNAc...) asparagine glycan is linked to Asn-148. Substrate is bound at residue Pro-157. Asn-169 carries an N-linked (GlcNAc...) asparagine glycan. His-187 serves as a coordination point for heme b. Thr-188 contributes to the Ca(2+) binding site. A glycan (N-linked (GlcNAc...) asparagine) is linked at Asn-203. Positions 234, 237, and 242 each coordinate Ca(2+). Residues Asn-274 and Asn-309 are each glycosylated (N-linked (GlcNAc...) asparagine).

Belongs to the peroxidase family. Classical plant (class III) peroxidase subfamily. Ca(2+) serves as cofactor. It depends on heme b as a cofactor.

The protein localises to the secreted. The enzyme catalyses 2 a phenolic donor + H2O2 = 2 a phenolic radical donor + 2 H2O. Removal of H(2)O(2), oxidation of toxic reductants, biosynthesis and degradation of lignin, suberization, auxin catabolism, response to environmental stresses such as wounding, pathogen attack and oxidative stress. These functions might be dependent on each isozyme/isoform in each plant tissue. This Oryza sativa subsp. japonica (Rice) protein is Peroxidase 2 (PRX112).